The sequence spans 528 residues: GMP synthase [glutamine-hydrolyzing] (528 aa).

The Glutamine amidotransferase type-1 domain maps to 13–204 (SILILDFGSQ…VYKISCCTAD (192 aa)). Cysteine 90 (nucleophile) is an active-site residue. Residues histidine 178 and glutamate 180 contribute to the active site. The 199-residue stretch at 205–403 (WTTETYIEET…LGLPDEIIKR (199 aa)) folds into the GMPS ATP-PPase domain. 232 to 238 (SGGVDSS) serves as a coordination point for ATP.

Homodimer.

It catalyses the reaction XMP + L-glutamine + ATP + H2O = GMP + L-glutamate + AMP + diphosphate + 2 H(+). Its pathway is purine metabolism; GMP biosynthesis; GMP from XMP (L-Gln route): step 1/1. Catalyzes the synthesis of GMP from XMP. This is GMP synthase [glutamine-hydrolyzing] from Prochlorococcus marinus (strain AS9601).